The sequence spans 220 residues: Glycerol-3-phosphate acyltransferase (220 aa).

Helical transmembrane passes span 11 to 31 (INVI…GYAL), 70 to 90 (LLIL…SKLF), 96 to 116 (LQWM…FLNF), 127 to 147 (GSVV…WFFV), 153 to 173 (ISSL…FFVP), and 193 to 213 (MVLI…NLLA).

The protein belongs to the PlsY family. In terms of assembly, probably interacts with PlsX.

It is found in the cell inner membrane. It carries out the reaction an acyl phosphate + sn-glycerol 3-phosphate = a 1-acyl-sn-glycero-3-phosphate + phosphate. The protein operates within lipid metabolism; phospholipid metabolism. Catalyzes the transfer of an acyl group from acyl-phosphate (acyl-PO(4)) to glycerol-3-phosphate (G3P) to form lysophosphatidic acid (LPA). This enzyme utilizes acyl-phosphate as fatty acyl donor, but not acyl-CoA or acyl-ACP. This chain is Glycerol-3-phosphate acyltransferase, found in Helicobacter acinonychis (strain Sheeba).